Consider the following 314-residue polypeptide: L-lactate dehydrogenase 2 (314 aa).

NAD(+) contacts are provided by residues valine 16, aspartate 37, lysine 42, tyrosine 68, and 82–83; that span reads GL. Residues glutamine 85, arginine 91, and 123 to 126 contribute to the substrate site; that span reads NPVD. NAD(+) is bound by residues 121–123 and serine 146; that span reads ATN. Substrate is bound at residue 151–154; that stretch reads DSAR. 2 residues coordinate beta-D-fructose 1,6-bisphosphate: arginine 156 and histidine 171. The active-site Proton acceptor is the histidine 178. Phosphotyrosine is present on tyrosine 223. Position 232 (threonine 232) interacts with substrate.

It belongs to the LDH/MDH superfamily. LDH family. Homotetramer.

It is found in the cytoplasm. The enzyme catalyses (S)-lactate + NAD(+) = pyruvate + NADH + H(+). Its pathway is fermentation; pyruvate fermentation to lactate; (S)-lactate from pyruvate: step 1/1. Allosterically activated by fructose 1,6-bisphosphate (FBP). Its function is as follows. Catalyzes the conversion of lactate to pyruvate. This chain is L-lactate dehydrogenase 2, found in Bacillus anthracis.